We begin with the raw amino-acid sequence, 633 residues long: Chaperone protein HtpG (633 aa).

The tract at residues 1 to 341 (MSATSSKETL…SADLPLNVSR (341 aa)) is a; substrate-binding. The segment at 342 to 558 (EILQSSRDID…EGDMSANLER (217 aa)) is b. A c region spans residues 559 to 633 (LLKAAGQAAP…LNGLLAMLPG (75 aa)).

Belongs to the heat shock protein 90 family. In terms of assembly, homodimer.

The protein localises to the cytoplasm. Functionally, molecular chaperone. Has ATPase activity. This Thiobacillus denitrificans (strain ATCC 25259 / T1) protein is Chaperone protein HtpG.